The sequence spans 150 residues: UPF0178 protein Daro_2879 (150 aa).

This sequence belongs to the UPF0178 family.

This chain is UPF0178 protein Daro_2879, found in Dechloromonas aromatica (strain RCB).